Consider the following 89-residue polypeptide: UPF0223 protein BCG9842_B1176 (89 aa).

This sequence belongs to the UPF0223 family.

This is UPF0223 protein BCG9842_B1176 from Bacillus cereus (strain G9842).